A 62-amino-acid polypeptide reads, in one-letter code: Short neurotoxin 1 (62 aa).

A compositionally biased stretch (polar residues) spans 1-17 (MQCCNQQSSQPKTTTTC). The interval 1-20 (MQCCNQQSSQPKTTTTCPGG) is disordered. Cystine bridges form between C3-C24, C17-C41, C43-C54, and C55-C60.

The protein belongs to the three-finger toxin family. Short-chain subfamily. Type I alpha-neurotoxin sub-subfamily. Expressed by the venom gland.

Its subcellular location is the secreted. Binds to muscle nicotinic acetylcholine receptor (nAChR) and inhibit acetylcholine from binding to the receptor, thereby impairing neuromuscular transmission. The chain is Short neurotoxin 1 from Acanthophis antarcticus (Common death adder).